The chain runs to 313 residues: Ribosomal RNA small subunit methyltransferase H (313 aa).

S-adenosyl-L-methionine is bound by residues glycine 35 to histidine 37, aspartate 55, phenylalanine 79, aspartate 101, and glutamine 108.

This sequence belongs to the methyltransferase superfamily. RsmH family.

Its subcellular location is the cytoplasm. It catalyses the reaction cytidine(1402) in 16S rRNA + S-adenosyl-L-methionine = N(4)-methylcytidine(1402) in 16S rRNA + S-adenosyl-L-homocysteine + H(+). Its function is as follows. Specifically methylates the N4 position of cytidine in position 1402 (C1402) of 16S rRNA. This Musicola paradisiaca (strain Ech703) (Dickeya paradisiaca) protein is Ribosomal RNA small subunit methyltransferase H.